Here is a 273-residue protein sequence, read N- to C-terminus: DNA repair protein RecO (273 aa).

The interval 250-273 is disordered; that stretch reads NVGQNPSGKDDLNERRDVDGTGES. Residues 257 to 273 are compositionally biased toward basic and acidic residues; sequence GKDDLNERRDVDGTGES.

It belongs to the RecO family.

Functionally, involved in DNA repair and RecF pathway recombination. This is DNA repair protein RecO from Desulfitobacterium hafniense (strain DSM 10664 / DCB-2).